The primary structure comprises 570 residues: Putative diflavin flavoprotein A 5 (570 aa).

Residues 38–231 are zinc metallo-hydrolase; that stretch reads ERGTTSNSYV…LQVRLYAVGH (194 aa). A Flavodoxin-like domain is found at 260–402; it reads VALLYASAYG…VGTDFAQTLK (143 aa). The interval 421–570 is flavodoxin-reductase-like; the sequence is VGRIVGSVCV…INHRKTGNHY (150 aa).

This sequence in the N-terminal section; belongs to the zinc metallo-hydrolase group 3 family. In the C-terminal section; belongs to the flavodoxin reductase family. It depends on Fe cation as a cofactor.

Mediates electron transfer from NADH to oxygen, reducing it to water. This modular protein has 3 redox cofactors, in other organisms the same activity requires 2 or 3 proteins. The polypeptide is Putative diflavin flavoprotein A 5 (dfa5) (Nostoc sp. (strain PCC 7120 / SAG 25.82 / UTEX 2576)).